A 232-amino-acid chain; its full sequence is Large ribosomal subunit protein uL1 (232 aa).

It belongs to the universal ribosomal protein uL1 family. Part of the 50S ribosomal subunit.

In terms of biological role, binds directly to 23S rRNA. The L1 stalk is quite mobile in the ribosome, and is involved in E site tRNA release. Functionally, protein L1 is also a translational repressor protein, it controls the translation of the L11 operon by binding to its mRNA. The sequence is that of Large ribosomal subunit protein uL1 from Parabacteroides distasonis (strain ATCC 8503 / DSM 20701 / CIP 104284 / JCM 5825 / NCTC 11152).